The primary structure comprises 643 residues: Transmembrane protein 62 (643 aa).

The helical transmembrane segment at 9–29 (VVAGLAAAAVAALLLEHYGLA) threads the bilayer. A glycan (N-linked (GlcNAc...) asparagine) is linked at asparagine 180. 4 consecutive transmembrane segments (helical) span residues 431–451 (IVAR…LITF), 484–504 (YSVL…GEII), 532–552 (GIIQ…WSLL), and 572–592 (IIPV…SCYF).

It localises to the membrane. In Mus musculus (Mouse), this protein is Transmembrane protein 62 (Tmem62).